A 164-amino-acid chain; its full sequence is MNIVDQQTFRDAMSCMGAAVNIITTDGPAGRAGFTASAVCSVTDTPPTLLVCLNRGASVWPVFNENRTLCVNTLSAGQESLSNLFGGKTPMEHRFAAARWQTGVTGCPQLGEALVSFDCRISQVVSVGTHDILFCAIEAIHRHATPYGLVWFDRSYHALMRPAC.

This sequence belongs to the non-flavoprotein flavin reductase family. RutF subfamily.

The catalysed reaction is FMNH2 + NAD(+) = FMN + NADH + 2 H(+). In terms of biological role, catalyzes the reduction of FMN to FMNH2 which is used to reduce pyrimidine by RutA via the Rut pathway. This Escherichia coli O6:K15:H31 (strain 536 / UPEC) protein is FMN reductase (NADH) RutF.